Reading from the N-terminus, the 152-residue chain is Heavy metal-associated isoprenylated plant protein 22 (152 aa).

Residues 28 to 91 (MQTVNIKVKI…TVQSTGKKKA (64 aa)) enclose the HMA domain. Residues cysteine 39 and cysteine 42 each coordinate a metal cation. A disordered region spans residues 123-152 (SEQAQAQPGSTDDKLMSLFSDENPNACTVM). Positions 142–152 (SDENPNACTVM) are enriched in polar residues. The residue at position 149 (cysteine 149) is a Cysteine methyl ester. Residue cysteine 149 is the site of S-farnesyl cysteine attachment. A propeptide spans 150 to 152 (TVM) (removed in mature form).

The protein belongs to the HIPP family. Interacts with ZHD11/HB29. In terms of tissue distribution, expressed in lateral roots and mature anthers.

The protein localises to the membrane. Functionally, heavy-metal-binding protein. Binds cadmium. May be involved in cadmium transport and play a role in cadmium detoxification. This Arabidopsis thaliana (Mouse-ear cress) protein is Heavy metal-associated isoprenylated plant protein 22.